A 199-amino-acid chain; its full sequence is 7-methyl-GTP pyrophosphatase (199 aa).

Residue D74 is the Proton acceptor of the active site.

Belongs to the Maf family. YceF subfamily. A divalent metal cation serves as cofactor.

The protein localises to the cytoplasm. The enzyme catalyses N(7)-methyl-GTP + H2O = N(7)-methyl-GMP + diphosphate + H(+). In terms of biological role, nucleoside triphosphate pyrophosphatase that hydrolyzes 7-methyl-GTP (m(7)GTP). May have a dual role in cell division arrest and in preventing the incorporation of modified nucleotides into cellular nucleic acids. This chain is 7-methyl-GTP pyrophosphatase, found in Cupriavidus metallidurans (strain ATCC 43123 / DSM 2839 / NBRC 102507 / CH34) (Ralstonia metallidurans).